The chain runs to 25 residues: Androctonin (25 aa).

2 disulfides stabilise this stretch: Cys-4–Cys-20 and Cys-10–Cys-16.

The protein localises to the secreted. In terms of biological role, active against both bacteria (Gram-positive and Gram-negative) and filamentous fungi. Acts on the membrane of the bacterial cells. It destabilize a membrane by modifying its properties. This chain is Androctonin, found in Androctonus australis (Sahara scorpion).